An 885-amino-acid polypeptide reads, in one-letter code: Sensor histidine kinase KdpD (885 aa).

Helical transmembrane passes span 384-404 (AIDMLKMILIQIICVMMGLWI), 415-435 (IILMIFLIGIILLSIWTRSFI), 436-456 (IGFLAAIINVFVFNYFFTEPR), and 464-484 (FDYPITFIVSILTSILTSALL). In terms of domain architecture, Histidine kinase spans 660–880 (SISHDIRTPL…IFYFNIYTDF (221 aa)). The residue at position 663 (histidine 663) is a Phosphohistidine; by autocatalysis.

The protein resides in the membrane. It catalyses the reaction ATP + protein L-histidine = ADP + protein N-phospho-L-histidine.. Cyclic di-AMP is a negative regulator of the Kdp system. Its function is as follows. Member of the two-component regulatory system KdpD/KdpE that regulates the transcription of a series of virulence factors through sensing external K(+) concentrations. Also regulates capsular polysaccharide production. May function as a membrane-associated protein kinase that phosphorylates KdpE in response to environmental signals. In turn, KpdE functions as a transcriptional regulator by direct binding to promoter regions of target genes including spa, hla, aur and geh. The chain is Sensor histidine kinase KdpD from Staphylococcus aureus (strain NCTC 8325 / PS 47).